The chain runs to 111 residues: Ribosome-binding factor A (111 aa).

The protein belongs to the RbfA family. In terms of assembly, monomer. Binds 30S ribosomal subunits, but not 50S ribosomal subunits or 70S ribosomes.

The protein localises to the cytoplasm. Functionally, one of several proteins that assist in the late maturation steps of the functional core of the 30S ribosomal subunit. Associates with free 30S ribosomal subunits (but not with 30S subunits that are part of 70S ribosomes or polysomes). Required for efficient processing of 16S rRNA. May interact with the 5'-terminal helix region of 16S rRNA. This is Ribosome-binding factor A from Helicobacter pylori (strain Shi470).